A 1342-amino-acid chain; its full sequence is DNA-directed RNA polymerase subunit beta (1342 aa).

This sequence belongs to the RNA polymerase beta chain family. In terms of assembly, the RNAP catalytic core consists of 2 alpha, 1 beta, 1 beta' and 1 omega subunit. When a sigma factor is associated with the core the holoenzyme is formed, which can initiate transcription.

The enzyme catalyses RNA(n) + a ribonucleoside 5'-triphosphate = RNA(n+1) + diphosphate. Its function is as follows. DNA-dependent RNA polymerase catalyzes the transcription of DNA into RNA using the four ribonucleoside triphosphates as substrates. The chain is DNA-directed RNA polymerase subunit beta from Photorhabdus laumondii subsp. laumondii (strain DSM 15139 / CIP 105565 / TT01) (Photorhabdus luminescens subsp. laumondii).